We begin with the raw amino-acid sequence, 381 residues long: ATP-dependent (S)-NAD(P)H-hydrate dehydratase (381 aa).

The YjeF C-terminal domain occupies 84 to 376 (AEAVVRRITP…EFLGKSLEDI (293 aa)). Residues Gly-197 and 250-256 (NVYEYKR) contribute to the (6S)-NADPHX site. ATP-binding positions include 290 to 294 (KGKAD) and 309 to 318 (GSPRRCGGQG). Asp-319 contributes to the (6S)-NADPHX binding site.

Belongs to the NnrD/CARKD family. Mg(2+) serves as cofactor.

The catalysed reaction is (6S)-NADHX + ATP = ADP + phosphate + NADH + H(+). The enzyme catalyses (6S)-NADPHX + ATP = ADP + phosphate + NADPH + H(+). Its function is as follows. Catalyzes the dehydration of the S-form of NAD(P)HX at the expense of ATP, which is converted to ADP. Together with NAD(P)HX epimerase, which catalyzes the epimerization of the S- and R-forms, the enzyme allows the repair of both epimers of NAD(P)HX, a damaged form of NAD(P)H that is a result of enzymatic or heat-dependent hydration. The protein is ATP-dependent (S)-NAD(P)H-hydrate dehydratase of Sorghum bicolor (Sorghum).